The chain runs to 490 residues: Betaine aldehyde dehydrogenase (490 aa).

Positions 26, 27, and 93 each coordinate K(+). NAD(+) is bound at residue 150 to 152 (GAW). Lys162 acts as the Charge relay system in catalysis. An NAD(+)-binding site is contributed by 176 to 179 (KPSE). A K(+)-binding site is contributed by Val180. An NAD(+)-binding site is contributed by 230–233 (GVAS). Leu246 provides a ligand contact to K(+). The active-site Proton acceptor is the Glu252. Positions 254, 286, and 387 each coordinate NAD(+). Cys286 acts as the Nucleophile in catalysis. Cysteine sulfenic acid (-SOH) is present on Cys286. Positions 457 and 460 each coordinate K(+). Glu464 (charge relay system) is an active-site residue.

This sequence belongs to the aldehyde dehydrogenase family. As to quaternary structure, dimer of dimers. K(+) is required as a cofactor.

The enzyme catalyses betaine aldehyde + NAD(+) + H2O = glycine betaine + NADH + 2 H(+). Its pathway is amine and polyamine biosynthesis; betaine biosynthesis via choline pathway; betaine from betaine aldehyde: step 1/1. Involved in the biosynthesis of the osmoprotectant glycine betaine. Catalyzes the irreversible oxidation of betaine aldehyde to the corresponding acid. In Escherichia coli O6:K15:H31 (strain 536 / UPEC), this protein is Betaine aldehyde dehydrogenase.